A 53-amino-acid chain; its full sequence is UPF0391 membrane protein TM1040_2720 (53 aa).

2 helical membrane-spanning segments follow: residues 4-24 (WALAFLVIALIAAVFGFGGIA) and 29-48 (GIAQILFFIFLVMFVVALIL).

It belongs to the UPF0391 family.

It localises to the cell membrane. The polypeptide is UPF0391 membrane protein TM1040_2720 (Ruegeria sp. (strain TM1040) (Silicibacter sp.)).